The following is a 303-amino-acid chain: Elongation factor Ts (303 aa).

The involved in Mg(2+) ion dislocation from EF-Tu stretch occupies residues Thr80–Val83.

The protein belongs to the EF-Ts family.

Its subcellular location is the cytoplasm. In terms of biological role, associates with the EF-Tu.GDP complex and induces the exchange of GDP to GTP. It remains bound to the aminoacyl-tRNA.EF-Tu.GTP complex up to the GTP hydrolysis stage on the ribosome. The sequence is that of Elongation factor Ts from Clostridium botulinum (strain Alaska E43 / Type E3).